The following is a 195-amino-acid chain: Glycerol-3-phosphate acyltransferase 1 (195 aa).

5 consecutive transmembrane segments (helical) span residues 6–26 (VILT…GHFL), 52–72 (LGIA…FLVV), 74–94 (LGLK…AVAG), 117–137 (LAVY…LTFL), and 168–188 (FGLG…ISLF).

The protein belongs to the PlsY family. In terms of assembly, probably interacts with PlsX.

It is found in the cell membrane. The enzyme catalyses an acyl phosphate + sn-glycerol 3-phosphate = a 1-acyl-sn-glycero-3-phosphate + phosphate. It participates in lipid metabolism; phospholipid metabolism. In terms of biological role, catalyzes the transfer of an acyl group from acyl-phosphate (acyl-PO(4)) to glycerol-3-phosphate (G3P) to form lysophosphatidic acid (LPA). This enzyme utilizes acyl-phosphate as fatty acyl donor, but not acyl-CoA or acyl-ACP. The protein is Glycerol-3-phosphate acyltransferase 1 of Moorella thermoacetica (strain ATCC 39073 / JCM 9320).